Here is a 274-residue protein sequence, read N- to C-terminus: Large ribosomal subunit protein uL2 (274 aa).

The disordered stretch occupies residues V223 to K274.

It belongs to the universal ribosomal protein uL2 family. As to quaternary structure, part of the 50S ribosomal subunit. Forms a bridge to the 30S subunit in the 70S ribosome.

Functionally, one of the primary rRNA binding proteins. Required for association of the 30S and 50S subunits to form the 70S ribosome, for tRNA binding and peptide bond formation. It has been suggested to have peptidyltransferase activity; this is somewhat controversial. Makes several contacts with the 16S rRNA in the 70S ribosome. This chain is Large ribosomal subunit protein uL2, found in Shewanella sp. (strain ANA-3).